A 488-amino-acid chain; its full sequence is Ribulose bisphosphate carboxylase large chain (488 aa).

The substrate site is built by N128 and T178. Residue K180 is the Proton acceptor of the active site. K182 is a binding site for substrate. 3 residues coordinate Mg(2+): K206, D208, and E209. K206 bears the N6-carboxylysine mark. H298 (proton acceptor) is an active-site residue. 3 residues coordinate substrate: R299, H331, and S383.

The protein belongs to the RuBisCO large chain family. Type I subfamily. As to quaternary structure, heterohexadecamer of 8 large chains and 8 small chains. It depends on Mg(2+) as a cofactor.

The catalysed reaction is 2 (2R)-3-phosphoglycerate + 2 H(+) = D-ribulose 1,5-bisphosphate + CO2 + H2O. It catalyses the reaction D-ribulose 1,5-bisphosphate + O2 = 2-phosphoglycolate + (2R)-3-phosphoglycerate + 2 H(+). Its function is as follows. RuBisCO catalyzes two reactions: the carboxylation of D-ribulose 1,5-bisphosphate, the primary event in carbon dioxide fixation, as well as the oxidative fragmentation of the pentose substrate. Both reactions occur simultaneously and in competition at the same active site. The sequence is that of Ribulose bisphosphate carboxylase large chain from Xanthobacter flavus.